We begin with the raw amino-acid sequence, 171 residues long: Translation initiation factor IF-3 (171 aa).

This sequence belongs to the IF-3 family. In terms of assembly, monomer.

Its subcellular location is the cytoplasm. Functionally, IF-3 binds to the 30S ribosomal subunit and shifts the equilibrium between 70S ribosomes and their 50S and 30S subunits in favor of the free subunits, thus enhancing the availability of 30S subunits on which protein synthesis initiation begins. The sequence is that of Translation initiation factor IF-3 from Thermus thermophilus (strain ATCC BAA-163 / DSM 7039 / HB27).